A 227-amino-acid chain; its full sequence is Octanoyltransferase (227 aa).

A BPL/LPL catalytic domain is found at Ala-31–Asn-209. Residues Arg-71–His-78, Ser-139–Gly-141, and Gly-152–Ala-154 contribute to the substrate site. Cys-170 acts as the Acyl-thioester intermediate in catalysis.

Belongs to the LipB family.

It localises to the cytoplasm. It carries out the reaction octanoyl-[ACP] + L-lysyl-[protein] = N(6)-octanoyl-L-lysyl-[protein] + holo-[ACP] + H(+). Its pathway is protein modification; protein lipoylation via endogenous pathway; protein N(6)-(lipoyl)lysine from octanoyl-[acyl-carrier-protein]: step 1/2. Catalyzes the transfer of endogenously produced octanoic acid from octanoyl-acyl-carrier-protein onto the lipoyl domains of lipoate-dependent enzymes. Lipoyl-ACP can also act as a substrate although octanoyl-ACP is likely to be the physiological substrate. The sequence is that of Octanoyltransferase from Baumannia cicadellinicola subsp. Homalodisca coagulata.